The sequence spans 323 residues: Transcriptional regulator protein Pur-beta-A (323 aa).

3 disordered regions span residues M1–A34, S100–A122, and Q286–D323. A2 bears the N-acetylalanine mark. The span at E9 to G19 shows a compositional bias: gly residues. The span at M24–A34 shows a compositional bias: basic and acidic residues. Residues E27–Y257 are DNA-binding. Over residues Q286 to S305 the composition is skewed to basic and acidic residues. Over residues D313–D323 the composition is skewed to acidic residues.

The protein belongs to the PUR DNA-binding protein family.

Its subcellular location is the nucleus. In terms of biological role, transcriptional regulator which can act as an activator or a repressor. The protein is Transcriptional regulator protein Pur-beta-A (purb-a) of Xenopus laevis (African clawed frog).